Consider the following 256-residue polypeptide: Protein RGF1 INDUCIBLE TRANSCRIPTION FACTOR 1 (256 aa).

The B box-type zinc finger occupies 21–59; that stretch reads CPYHETAKKNERNVCCLDCCTSLCPHCVPSHRFHRLLQV.

Expressed predominantly in root meristematic zones.

The protein localises to the nucleus. In terms of biological role, probable transcription factor that plays a central role in mediating RGF1 hormone peptide signaling leading to the production of reactive oxygen species (ROS) in roots to modulate meristem size and root growth, probably via oxidative post-translational modification of the transcription factor PLETHORA (e.g. PLT1 and PLT2). This chain is Protein RGF1 INDUCIBLE TRANSCRIPTION FACTOR 1, found in Arabidopsis thaliana (Mouse-ear cress).